The chain runs to 229 residues: Large ribosomal subunit protein uL1 (229 aa).

Belongs to the universal ribosomal protein uL1 family. Part of the 50S ribosomal subunit.

Binds directly to 23S rRNA. The L1 stalk is quite mobile in the ribosome, and is involved in E site tRNA release. Its function is as follows. Protein L1 is also a translational repressor protein, it controls the translation of the L11 operon by binding to its mRNA. This is Large ribosomal subunit protein uL1 from Phytoplasma australiense.